The following is a 93-amino-acid chain: YcgL domain-containing protein PSHAb0508 (93 aa).

Residues 1–85 (MLTAVYKSKK…PQENLLSQLR (85 aa)) form the YcgL domain.

The protein is YcgL domain-containing protein PSHAb0508 of Pseudoalteromonas translucida (strain TAC 125).